The sequence spans 515 residues: Maturase K (515 aa).

This sequence belongs to the intron maturase 2 family. MatK subfamily.

The protein resides in the plastid. It localises to the chloroplast. In terms of biological role, usually encoded in the trnK tRNA gene intron. Probably assists in splicing its own and other chloroplast group II introns. In Larix laricina (Tamarack), this protein is Maturase K.